The sequence spans 62 residues: Photosystem II reaction center protein Z (62 aa).

Helical transmembrane passes span 8-28 (LVLLLIALSTVLVVGVPVVLA) and 41-61 (YTGAGLWTGLVIVTSLVNSLV).

Belongs to the PsbZ family. As to quaternary structure, PSII is composed of 1 copy each of membrane proteins PsbA, PsbB, PsbC, PsbD, PsbE, PsbF, PsbH, PsbI, PsbJ, PsbK, PsbL, PsbM, PsbT, PsbX, PsbY, PsbZ, Psb30/Ycf12, at least 3 peripheral proteins of the oxygen-evolving complex and a large number of cofactors. It forms dimeric complexes.

The protein resides in the plastid. It is found in the chloroplast thylakoid membrane. Its function is as follows. May control the interaction of photosystem II (PSII) cores with the light-harvesting antenna, regulates electron flow through the 2 photosystem reaction centers. PSII is a light-driven water plastoquinone oxidoreductase, using light energy to abstract electrons from H(2)O, generating a proton gradient subsequently used for ATP formation. In Pyropia yezoensis (Susabi-nori), this protein is Photosystem II reaction center protein Z.